The sequence spans 94 residues: Large ribosomal subunit protein eL37 (94 aa).

Residues Cys-19, Cys-22, Cys-34, and Cys-37 each coordinate Zn(2+). A C4-type zinc finger spans residues 19–37 (CRRCGKATYHKQKLRCAAC).

Belongs to the eukaryotic ribosomal protein eL37 family. The cofactor is Zn(2+).

Its subcellular location is the cytoplasm. Its function is as follows. Binds to the 23S rRNA. This is Large ribosomal subunit protein eL37 (RPL37) from Tetrahymena thermophila (strain SB210).